Reading from the N-terminus, the 256-residue chain is Global transcriptional regulator CodY (256 aa).

Residues 1–155 (MSLLSKTREL…AATVIGMEIL (155 aa)) are GAF domain. The H-T-H motif DNA-binding region spans 203–222 (ASKVADRVGITRSVIVNALR).

It belongs to the CodY family.

The protein resides in the cytoplasm. Its function is as follows. DNA-binding global transcriptional regulator which is involved in the adaptive response to starvation and acts by directly or indirectly controlling the expression of numerous genes in response to nutrient availability. During rapid exponential growth, CodY is highly active and represses genes whose products allow adaptation to nutrient depletion. This is Global transcriptional regulator CodY from Staphylococcus epidermidis (strain ATCC 35984 / DSM 28319 / BCRC 17069 / CCUG 31568 / BM 3577 / RP62A).